Reading from the N-terminus, the 234-residue chain is Phycobilisome rod-core linker polypeptide cpcG (234 aa).

The region spanning 11–191 (SSQNHRVNSF…PRYGSDFKER (181 aa)) is the PBS-linker domain.

It belongs to the phycobilisome linker protein family. The phycobilisome is a hemidiscoidal structure that is composed of two distinct substructures: a core complex and a number of rods radiating from the core.

Its subcellular location is the plastid. The protein localises to the chloroplast thylakoid membrane. Its function is as follows. Rod-core linker protein required for attachment of phycocyanin to allophycocyanin in cores of phycobilisomes. Functionally, linker polypeptides determine the state of aggregation and the location of the disk-shaped phycobiliprotein units within the phycobilisome and modulate their spectroscopic properties in order to mediate a directed and optimal energy transfer. This Cyanidium caldarium (Red alga) protein is Phycobilisome rod-core linker polypeptide cpcG (cpcG).